The following is a 37-amino-acid chain: Large ribosomal subunit protein bL36 (37 aa).

Belongs to the bacterial ribosomal protein bL36 family.

In Shewanella baltica (strain OS223), this protein is Large ribosomal subunit protein bL36.